Consider the following 416-residue polypeptide: Enterobactin exporter EntS (416 aa).

Residues 1–21 are Cytoplasmic-facing; sequence MNKQSWLLNLSLLKTHPAFRA. Residues 22–42 traverse the membrane as a helical segment; that stretch reads VFLARFISIVSLGLLGVAVPV. The Periplasmic segment spans residues 43 to 55; sequence QIQMMTHSTWQVG. Residues 56-76 form a helical membrane-spanning segment; the sequence is LSVTLTGGAMFVGLMVGGVLA. The Cytoplasmic segment spans residues 77 to 83; it reads DRYERKK. A helical membrane pass occupies residues 84-104; the sequence is VILLARGTCGIGFIGLCLNAL. Topologically, residues 105-109 are periplasmic; sequence LPEPS. Residues 110–130 form a helical membrane-spanning segment; the sequence is LLAIYLLGLWDGFFASLGVTA. Residues 131–156 are Cytoplasmic-facing; the sequence is LLAATPALVGRENLMQAGAITMLTVR. Residues 157–177 traverse the membrane as a helical segment; it reads LGSVISPMIGGLLLATGGVAW. Asparagine 178 is a topological domain (periplasmic). Residues 179–199 form a helical membrane-spanning segment; the sequence is YGLAAAGTFITLLPLLSLPAL. The Cytoplasmic segment spans residues 200-218; it reads PPPPQPREHPLKSLLAGFR. The chain crosses the membrane as a helical span at residues 219–239; that stretch reads FLLASPLVGGIALLGGLLTMA. The Periplasmic portion of the chain corresponds to 240-256; that stretch reads SAVRVLYPALADNWQMS. The helical transmembrane segment at 257 to 277 threads the bilayer; the sequence is AAQIGFLYAAIPLGAAIGALT. The Cytoplasmic portion of the chain corresponds to 278–287; that stretch reads SGKLAHSVRP. The helical transmembrane segment at 288–307 threads the bilayer; the sequence is GLLMLLSTLGAFLAIGLFGL. Over 308–313 the chain is Periplasmic; it reads MPMWIL. Residues 314 to 336 form a helical membrane-spanning segment; the sequence is GVVCLALFGWLSAVSSLLQYTML. Residues 337–356 lie on the Cytoplasmic side of the membrane; it reads QTQTPEAMLGRINGLWTAQN. The helical transmembrane segment at 357 to 377 threads the bilayer; that stretch reads VTGDAIGAALLGGLGAMMTPV. A topological domain (periplasmic) is located at residue alanine 378. Residues 379–399 traverse the membrane as a helical segment; sequence SASASGFGLLIIGVLLLLVLV. At 400-416 the chain is on the cytoplasmic side; it reads ELRRFRQTPPQVTASGS.

It belongs to the major facilitator superfamily. EntS (TC 2.A.1.38) family.

It is found in the cell inner membrane. In terms of biological role, component of an export pathway for enterobactin. The sequence is that of Enterobactin exporter EntS from Escherichia coli O6:K15:H31 (strain 536 / UPEC).